Consider the following 278-residue polypeptide: Elongation factor Ts (278 aa).

Positions 82–85 (TDFV) are involved in Mg(2+) ion dislocation from EF-Tu.

Belongs to the EF-Ts family.

Its subcellular location is the cytoplasm. Its function is as follows. Associates with the EF-Tu.GDP complex and induces the exchange of GDP to GTP. It remains bound to the aminoacyl-tRNA.EF-Tu.GTP complex up to the GTP hydrolysis stage on the ribosome. In Streptomyces coelicolor (strain ATCC BAA-471 / A3(2) / M145), this protein is Elongation factor Ts (tsf).